We begin with the raw amino-acid sequence, 272 residues long: Golgi to ER traffic protein 5 (272 aa).

Disordered regions lie at residues 1–35 (MSTVDQSTVTTALSSSSSNRHQGNDTYSIPKHSGT) and 85–105 (LHAPHPEMPKKTKQPLAPGSS). Positions 108 to 198 (ITVHLKSARN…VEFGVMIIGG (91 aa)) constitute a Ubiquitin-like domain. Residues 212 to 231 (SAEQKESYEPPKPAVGPSGE) are disordered.

Belongs to the GET5 family. In terms of assembly, forms homodimers via its C-terminal domain. Component of the get4/get5/sgt2 sorting complex. Binds directly sgt12 homodimers.

The protein resides in the cytoplasm. In terms of biological role, component of the get4/get5/sgt2 sorting complex involved in the GET (guided entry of TA proteins) pathway that leads to the insertion of tail-anchored (TA) proteins into the endoplasmic reticulum. Get4 and get5 form an obligate complex that catalyzes the transfer of tail-anchored proteins destined to the endoplasmic reticulum from sgt2 to the cytosolic targeting factor which then targets the TA protein to the ER membrane via get1/get2. This is Golgi to ER traffic protein 5 from Aspergillus fumigatus (strain ATCC MYA-4609 / CBS 101355 / FGSC A1100 / Af293) (Neosartorya fumigata).